The primary structure comprises 401 residues: Formate-dependent phosphoribosylglycinamide formyltransferase (401 aa).

N(1)-(5-phospho-beta-D-ribosyl)glycinamide contacts are provided by residues 22 to 23 and glutamate 82; that span reads EL. Residues arginine 115, lysine 157, 162–167, 197–200, and glutamate 205 each bind ATP; these read SSGKGQ and EGFI. One can recognise an ATP-grasp domain in the interval 120–315; sequence RLAAETLGLP…EFELHARAIL (196 aa). Mg(2+)-binding residues include glutamate 274 and glutamate 286. Residues aspartate 293, lysine 362, and 369-370 each bind N(1)-(5-phospho-beta-D-ribosyl)glycinamide; that span reads RR.

It belongs to the PurK/PurT family. Homodimer.

The enzyme catalyses N(1)-(5-phospho-beta-D-ribosyl)glycinamide + formate + ATP = N(2)-formyl-N(1)-(5-phospho-beta-D-ribosyl)glycinamide + ADP + phosphate + H(+). The protein operates within purine metabolism; IMP biosynthesis via de novo pathway; N(2)-formyl-N(1)-(5-phospho-D-ribosyl)glycinamide from N(1)-(5-phospho-D-ribosyl)glycinamide (formate route): step 1/1. Involved in the de novo purine biosynthesis. Catalyzes the transfer of formate to 5-phospho-ribosyl-glycinamide (GAR), producing 5-phospho-ribosyl-N-formylglycinamide (FGAR). Formate is provided by PurU via hydrolysis of 10-formyl-tetrahydrofolate. The sequence is that of Formate-dependent phosphoribosylglycinamide formyltransferase from Cupriavidus pinatubonensis (strain JMP 134 / LMG 1197) (Cupriavidus necator (strain JMP 134)).